Here is a 313-residue protein sequence, read N- to C-terminus: Platelet glycoprotein VI (313 aa).

The first 21 residues, 1–21 (MSPASPTFFCIGLCVLQVIQT), serve as a signal peptide directing secretion. Residues 22-265 (QSGPLPKPSL…FGFAHQHYAK (244 aa)) are Extracellular-facing. Ig-like C2-type domains follow at residues 27-105 (PKPS…DQLE) and 115-197 (PSLS…APSD). Residues C49 and C89 are joined by a disulfide bond. Residue N93 is glycosylated (N-linked (GlcNAc...) asparagine). C135 and C181 are disulfide-bonded. Positions 213–236 (VPTEESFPVTESSRRPSILPTNKI) are disordered. A glycan (N-linked (GlcNAc...) asparagine) is linked at N244. The chain crosses the membrane as a helical span at residues 266-286 (GNLVRICLGATIIIILLGLLA). Topologically, residues 287–313 (EDWHSRKKCLQHRMRALQRPLPPLPLA) are cytoplasmic.

As to quaternary structure, associated with Fc receptor gamma chain. The GPVI:FcRgamma complex is associated with the Src kinase family FYN and LYN. Interacts with TRAF4. Interacts with COL1A1, but not with COL4A4. In terms of tissue distribution, megakaryocytes and platelets.

Its subcellular location is the cell membrane. Functionally, collagen receptor involved in collagen-induced platelet adhesion and activation. Plays a key role in platelet procoagulant activity and subsequent thrombin and fibrin formation. This procoagulant function may contribute to arterial and venous thrombus formation. The signaling pathway involves the FcR gamma-chain, the Src kinases (likely FYN or LYN) and SYK, the adapter protein LAT and leads to the activation of PLCG2. This Mus musculus (Mouse) protein is Platelet glycoprotein VI.